Consider the following 338-residue polypeptide: Sporulation protein YdcC (338 aa).

Residues 8 to 25 (FVLLLTGLLAVLILSACG) form a helical membrane-spanning segment.

It is found in the cell membrane. Functionally, required for efficient sporulation. This is Sporulation protein YdcC (ydcC) from Bacillus subtilis (strain 168).